We begin with the raw amino-acid sequence, 118 residues long: Large ribosomal subunit protein bL19 (118 aa).

It belongs to the bacterial ribosomal protein bL19 family.

Functionally, this protein is located at the 30S-50S ribosomal subunit interface and may play a role in the structure and function of the aminoacyl-tRNA binding site. The chain is Large ribosomal subunit protein bL19 from Frankia alni (strain DSM 45986 / CECT 9034 / ACN14a).